We begin with the raw amino-acid sequence, 201 residues long: Anthranilate synthase component 2 (201 aa).

The region spanning 1-199 (MLLMIDNYDS…LRQQGGVRGE (199 aa)) is the Glutamine amidotransferase type-1 domain. L-glutamine is bound at residue 52–54 (GPC). Cys79 (nucleophile; for GATase activity) is an active-site residue. L-glutamine is bound by residues Gln83 and 129–130 (SL). Residues His173 and Glu175 each act as for GATase activity in the active site.

As to quaternary structure, heterotetramer consisting of two non-identical subunits: a beta subunit (TrpG) and a large alpha subunit (TrpE).

The catalysed reaction is chorismate + L-glutamine = anthranilate + pyruvate + L-glutamate + H(+). Its pathway is amino-acid biosynthesis; L-tryptophan biosynthesis; L-tryptophan from chorismate: step 1/5. Functionally, part of a heterotetrameric complex that catalyzes the two-step biosynthesis of anthranilate, an intermediate in the biosynthesis of L-tryptophan. In the first step, the glutamine-binding beta subunit (TrpG) of anthranilate synthase (AS) provides the glutamine amidotransferase activity which generates ammonia as a substrate that, along with chorismate, is used in the second step, catalyzed by the large alpha subunit of AS (TrpE) to produce anthranilate. In the absence of TrpG, TrpE can synthesize anthranilate directly from chorismate and high concentrations of ammonia. The polypeptide is Anthranilate synthase component 2 (Pseudomonas aeruginosa (strain ATCC 15692 / DSM 22644 / CIP 104116 / JCM 14847 / LMG 12228 / 1C / PRS 101 / PAO1)).